A 71-amino-acid chain; its full sequence is UPF0352 protein Spea_1764 (71 aa).

This sequence belongs to the UPF0352 family.

The polypeptide is UPF0352 protein Spea_1764 (Shewanella pealeana (strain ATCC 700345 / ANG-SQ1)).